The sequence spans 225 residues: MSPRLRLQPEAVGIGMTSQRVRDRLVDRLREAGIVDESTLNAIRVVPRHLFIDEALASRAYEDTALPIGHGQTISQPWVVARMTEAVLQVAPKRVLEVGTGSGYQAAVLGALGLEVYTVERIGDLLRQARKRFRALGMNIRTKHDDGRVGWAEHGPFDAIVVTAAAPALVDVLIEQLAEGGRLVAPVGGPSAQSLVQLDRRADGSIEQHVLAPVTFVPLLSGMLD.

Ser75 is a catalytic residue.

Belongs to the methyltransferase superfamily. L-isoaspartyl/D-aspartyl protein methyltransferase family.

The protein resides in the cytoplasm. It catalyses the reaction [protein]-L-isoaspartate + S-adenosyl-L-methionine = [protein]-L-isoaspartate alpha-methyl ester + S-adenosyl-L-homocysteine. In terms of biological role, catalyzes the methyl esterification of L-isoaspartyl residues in peptides and proteins that result from spontaneous decomposition of normal L-aspartyl and L-asparaginyl residues. It plays a role in the repair and/or degradation of damaged proteins. This is Protein-L-isoaspartate O-methyltransferase from Stenotrophomonas maltophilia (strain R551-3).